Reading from the N-terminus, the 283-residue chain is Bifunctional protein FolD (283 aa).

NADP(+)-binding positions include G165 to S167, S190, and I231.

This sequence belongs to the tetrahydrofolate dehydrogenase/cyclohydrolase family. As to quaternary structure, homodimer.

It catalyses the reaction (6R)-5,10-methylene-5,6,7,8-tetrahydrofolate + NADP(+) = (6R)-5,10-methenyltetrahydrofolate + NADPH. It carries out the reaction (6R)-5,10-methenyltetrahydrofolate + H2O = (6R)-10-formyltetrahydrofolate + H(+). It functions in the pathway one-carbon metabolism; tetrahydrofolate interconversion. Its function is as follows. Catalyzes the oxidation of 5,10-methylenetetrahydrofolate to 5,10-methenyltetrahydrofolate and then the hydrolysis of 5,10-methenyltetrahydrofolate to 10-formyltetrahydrofolate. This is Bifunctional protein FolD from Herminiimonas arsenicoxydans.